The primary structure comprises 223 residues: Thiamine-phosphate synthase (223 aa).

Residues 37–41 (QLREK) and asparagine 69 contribute to the 4-amino-2-methyl-5-(diphosphooxymethyl)pyrimidine site. The Mg(2+) site is built by aspartate 70 and aspartate 89. Serine 108 contributes to the 4-amino-2-methyl-5-(diphosphooxymethyl)pyrimidine binding site. 2-[(2R,5Z)-2-carboxy-4-methylthiazol-5(2H)-ylidene]ethyl phosphate is bound at residue 134-136 (TGT). Lysine 137 is a 4-amino-2-methyl-5-(diphosphooxymethyl)pyrimidine binding site. 2-[(2R,5Z)-2-carboxy-4-methylthiazol-5(2H)-ylidene]ethyl phosphate-binding positions include glycine 167 and 187–188 (VS). The disordered stretch occupies residues 197-223 (AAATRKLQGSVDTASVESQLPSEEPSA). Positions 206 to 217 (SVDTASVESQLP) are enriched in polar residues.

The protein belongs to the thiamine-phosphate synthase family. Requires Mg(2+) as cofactor.

It catalyses the reaction 2-[(2R,5Z)-2-carboxy-4-methylthiazol-5(2H)-ylidene]ethyl phosphate + 4-amino-2-methyl-5-(diphosphooxymethyl)pyrimidine + 2 H(+) = thiamine phosphate + CO2 + diphosphate. It carries out the reaction 2-(2-carboxy-4-methylthiazol-5-yl)ethyl phosphate + 4-amino-2-methyl-5-(diphosphooxymethyl)pyrimidine + 2 H(+) = thiamine phosphate + CO2 + diphosphate. The enzyme catalyses 4-methyl-5-(2-phosphooxyethyl)-thiazole + 4-amino-2-methyl-5-(diphosphooxymethyl)pyrimidine + H(+) = thiamine phosphate + diphosphate. Its pathway is cofactor biosynthesis; thiamine diphosphate biosynthesis; thiamine phosphate from 4-amino-2-methyl-5-diphosphomethylpyrimidine and 4-methyl-5-(2-phosphoethyl)-thiazole: step 1/1. Condenses 4-methyl-5-(beta-hydroxyethyl)thiazole monophosphate (THZ-P) and 2-methyl-4-amino-5-hydroxymethyl pyrimidine pyrophosphate (HMP-PP) to form thiamine monophosphate (TMP). The sequence is that of Thiamine-phosphate synthase from Haloquadratum walsbyi (strain DSM 16790 / HBSQ001).